Consider the following 48-residue polypeptide: Fimbrial assembly protein, serogroup A1 (48 aa).

This chain is Fimbrial assembly protein, serogroup A1 (fimB), found in Dichelobacter nodosus (Bacteroides nodosus).